The sequence spans 80 residues: Delta-actitoxin-Amc2a (80 aa).

The N-terminal stretch at 1-19 is a signal peptide; that stretch reads MNKVLFLCLVVLCATSAFA. Residues 20 to 30 constitute a propeptide that is removed on maturation; sequence AEEEYVERAPV. 3 disulfide bridges follow: Cys-37/Cys-73, Cys-39/Cys-65, and Cys-55/Cys-74. Pro-56 carries the hydroxyproline modification.

Belongs to the sea anemone type 3 (BDS) potassium channel toxin family.

It localises to the secreted. It is found in the nematocyst. Functionally, neurotoxon that induces paralysis when injected into crabs. This Antheopsis maculata (Sea anemone) protein is Delta-actitoxin-Amc2a.